An 891-amino-acid polypeptide reads, in one-letter code: Protein translocase subunit SecA (891 aa).

ATP contacts are provided by residues Gln83, 101 to 105, and Asp489; that span reads GEGKT.

The protein belongs to the SecA family.

Its subcellular location is the plastid. It localises to the chloroplast stroma. The protein localises to the chloroplast thylakoid membrane. It carries out the reaction ATP + H2O + cellular proteinSide 1 = ADP + phosphate + cellular proteinSide 2.. Its function is as follows. Has a central role in coupling the hydrolysis of ATP to the transfer of proteins across the thylakoid membrane. The protein is Protein translocase subunit SecA of Diacronema lutheri (Unicellular marine alga).